The primary structure comprises 100 residues: Small ribosomal subunit protein uS14c (100 aa).

Belongs to the universal ribosomal protein uS14 family. As to quaternary structure, part of the 30S ribosomal subunit.

Its subcellular location is the plastid. It is found in the chloroplast. Functionally, binds 16S rRNA, required for the assembly of 30S particles. The sequence is that of Small ribosomal subunit protein uS14c from Populus alba (White poplar).